Here is a 374-residue protein sequence, read N- to C-terminus: 4-hydroxy-3-methylbut-2-en-1-yl diphosphate synthase (flavodoxin) (374 aa).

[4Fe-4S] cluster is bound by residues Cys-270, Cys-273, Cys-305, and Glu-312.

It belongs to the IspG family. [4Fe-4S] cluster is required as a cofactor.

It catalyses the reaction (2E)-4-hydroxy-3-methylbut-2-enyl diphosphate + oxidized [flavodoxin] + H2O + 2 H(+) = 2-C-methyl-D-erythritol 2,4-cyclic diphosphate + reduced [flavodoxin]. The protein operates within isoprenoid biosynthesis; isopentenyl diphosphate biosynthesis via DXP pathway; isopentenyl diphosphate from 1-deoxy-D-xylulose 5-phosphate: step 5/6. Functionally, converts 2C-methyl-D-erythritol 2,4-cyclodiphosphate (ME-2,4cPP) into 1-hydroxy-2-methyl-2-(E)-butenyl 4-diphosphate. This is 4-hydroxy-3-methylbut-2-en-1-yl diphosphate synthase (flavodoxin) from Yersinia enterocolitica serotype O:8 / biotype 1B (strain NCTC 13174 / 8081).